We begin with the raw amino-acid sequence, 534 residues long: Glucans biosynthesis protein D (534 aa).

Residues 1–30 (MRMQRRHLLKNAAAALAALGLPALPQWALA) constitute a signal peptide (tat-type signal).

This sequence belongs to the OpgD/OpgG family. In terms of processing, predicted to be exported by the Tat system. The position of the signal peptide cleavage has not been experimentally proven.

It is found in the periplasm. Its pathway is glycan metabolism; osmoregulated periplasmic glucan (OPG) biosynthesis. Its function is as follows. Probably involved in the control of the structural glucose backbone of osmoregulated periplasmic glucans (OPGs). This chain is Glucans biosynthesis protein D, found in Xanthomonas oryzae pv. oryzae (strain KACC10331 / KXO85).